A 410-amino-acid chain; its full sequence is Chloroacetanilide N-alkylformylase, ferredoxin reductase component (410 aa).

7 residues coordinate FAD: Gly14, Asp36, Lys49, Val82, Arg130, Asp279, and Val298.

Belongs to the FAD-dependent oxidoreductase family. The chloroacetanilide N-alkylformylase multicomponent enzyme system is composed of an oxygenase component (CndA) and an electron transfer component formed by a ferredoxin reductase (CndC1) and a ferredoxin (CndB1). In vitro, chloroacetanilide N-alkylformylase assays in which CndB1 is substituted for CndB2 demonstrate that the two enzymes possess nearly identical activities. Requires FAD as cofactor.

The catalysed reaction is 2 reduced [2Fe-2S]-[ferredoxin] + NAD(+) + H(+) = 2 oxidized [2Fe-2S]-[ferredoxin] + NADH. Its function is as follows. Component of the chloroacetanilide N-alkylformylase multicomponent enzyme system involved in the degradation of chloroacetanilide herbicides (N-alkoxyalkyl-N-chloroacetyl-substituted aniline derivatives). In vitro, catalyzes the transfers of electrons from ferredoxin (CndB1) to NADH. N-dealkylase utilizes NADH, but not NADPH, as the electron donor. The polypeptide is Chloroacetanilide N-alkylformylase, ferredoxin reductase component (Rhizorhabdus wittichii (strain DC-6 / KACC 16600) (Sphingomonas wittichii)).